A 1356-amino-acid polypeptide reads, in one-letter code: Partitioning defective 3 homolog (1356 aa).

Ser-25 is subject to Phosphoserine. 2 disordered regions span residues 81–100 (EQDPHHGGDGTSASSTGTQS) and 154–262 (SVSD…GLEH). Thr-91 is subject to Phosphothreonine. The span at 91-100 (TSASSTGTQS) shows a compositional bias: low complexity. Composition is skewed to polar residues over residues 154 to 163 (SVSDSNFSSE) and 171 to 187 (TRWSTTAGFLKQNTAGS). A phosphoserine mark is found at Ser-156 and Ser-174. The span at 190 to 203 (TCDRKKDENYRSLP) shows a compositional bias: basic and acidic residues. The span at 204–224 (RDTSNWSNQFQRDNARSSLSA) shows a compositional bias: polar residues. The span at 246-260 (DNSRVEPVGHADTGL) shows a compositional bias: basic and acidic residues. In terms of domain architecture, PDZ 1 spans 271–359 (MVKLVEVPND…TPIIWFHVVP (89 aa)). At Ser-383 the chain carries Phosphoserine. Positions 408–448 (LNHPPEQIDSHSRLPHSAHPSGKPPSAPASAPQNVFSTTVS) are disordered. PDZ domains lie at 461–546 (NIQL…LVFR) and 590–677 (EVPL…GMIQ). Tyr-489 carries the post-translational modification Phosphotyrosine. 7 positions are modified to phosphoserine: Ser-692, Ser-695, Ser-715, Ser-728, Ala-792, Ser-809, and Ser-827. Residues 712–936 (RRISHSLYSG…AAIDKSYDKP (225 aa)) are interaction with PRKCI and PRKCZ. Residue Lys-834 is modified to N6-acetyllysine. Ser-837 is modified (phosphoserine). The residue at position 851 (Lys-851) is an N6-acetyllysine. Phosphoserine is present on residues Ser-852 and Ser-873. 2 disordered regions span residues 865–886 (TVDDQKAGSPSRDVGPSLGLKK) and 932–1025 (SYDK…DMFR). The residue at position 885 (Lys-885) is an N6-acetyllysine. The segment at 935–1356 (KPAVDDDDEG…TPEKGRPFYS (422 aa)) is interaction with FRMD4A. The span at 939 to 953 (DDDDEGMETLEEDTE) shows a compositional bias: acidic residues. Ser-962 carries the post-translational modification Phosphoserine; by AURKA. Residues 968–982 (DQPSHSLERQMNGNQ) show a composition bias toward polar residues. A phosphoserine mark is found at Ser-971 and Ser-973. Residues 983–1009 (EKGDKTDRKKDKTGKEKKKDRDKEKDK) show a composition bias toward basic and acidic residues. The residue at position 1046 (Ser-1046) is a Phosphoserine. Positions 1049–1077 (SEEERIRMKQEQERIQAKTREFRERQARE) form a coiled coil. The tract at residues 1129–1356 (QVKKPRNSKP…TPEKGRPFYS (228 aa)) is disordered. The span at 1136 to 1149 (SKPSPVDSNRSTPS) shows a compositional bias: polar residues. The span at 1150 to 1177 (NHDRIQRLRQEFQQAKQDEDVEDRRRTY) shows a compositional bias: basic and acidic residues. Coiled-coil stretches lie at residues 1151 to 1174 (HDRIQRLRQEFQQAKQDEDVEDRR), 1201 to 1224 (VQMQRQRQEERESSQQAQRQYSSL), and 1280 to 1301 (MLETQELLRQEQRRKEQQMKKQ). Over residues 1196-1205 (SVSVEVQMQR) the composition is skewed to low complexity. Residues 1221–1245 (YSSLPRQSRKNASSVSQDSWEQNYS) are compositionally biased toward polar residues. Basic and acidic residues predominate over residues 1285-1298 (ELLRQEQRRKEQQM). A compositionally biased stretch (polar residues) spans 1337 to 1346 (SQVARLNRLQ). Positions 1347-1356 (TPEKGRPFYS) are enriched in basic and acidic residues. Position 1350 is an N6-acetyllysine (Lys-1350).

This sequence belongs to the PAR3 family. As to quaternary structure, interacts (via PDZ 1 domain) with F11R/JAM1, PARD6A and PARD6B. Interacts with PRCKI and CDH5. Interacts (via PDZ 3 domain) with PTEN (via C-terminus). Part of a complex with PARD6A or PARD6B, PRKCI or PRKCZ and CDC42 or RAC1. Component of a complex whose core is composed of ARHGAP17, AMOT, PALS1, PATJ and PARD3/PAR3. Interacts with LIMK2, AURKA and AURKB. Component of the Par polarity complex, composed of at least phosphorylated PRKCZ, PARD3 and TIAM1. Directly interacts with TIAM1 and TIAM2. Interacts with ECT2, FBF1 and SIRT2. Interacts (via coiled-coil domain) with FRMD4A. Found in a complex with PARD3, CYTH1 and FRMD4A. Interacts with SAPCD2. Interacts with PRKCA. Interacts with PRKCZ. In terms of processing, acetylated. Deacetylated by SIRT2, thereby inhibiting Schwann cell peripheral myelination. Post-translationally, phosphorylation at Ser-827 by PRKCZ and PRKCI occurs at the most apical tip of epithelial cell-cell contacts during the initial phase of tight junction formation and may promote dissociation of the complex with PARD6. EGF-induced Tyr-1127 phosphorylation mediates dissociation from LIMK2. Phosphorylation by AURKA at Ser-962 is required for the normal establishment of neuronal polarity. As to expression, widely expressed.

The protein resides in the cytoplasm. It is found in the endomembrane system. It localises to the cell junction. The protein localises to the tight junction. Its subcellular location is the adherens junction. The protein resides in the cell membrane. It is found in the cell cortex. It localises to the cytoskeleton. Functionally, adapter protein involved in asymmetrical cell division and cell polarization processes. Seems to play a central role in the formation of epithelial tight junctions. Targets the phosphatase PTEN to cell junctions. Involved in Schwann cell peripheral myelination. Association with PARD6B may prevent the interaction of PARD3 with F11R/JAM1, thereby preventing tight junction assembly. The PARD6-PARD3 complex links GTP-bound Rho small GTPases to atypical protein kinase C proteins. Required for establishment of neuronal polarity and normal axon formation in cultured hippocampal neurons. This is Partitioning defective 3 homolog from Homo sapiens (Human).